A 282-amino-acid chain; its full sequence is HTH-type transcriptional activator RhaR (282 aa).

The HTH araC/xylS-type domain maps to 179 to 277 (DKLITRLAAS…GMTPSQWRHL (99 aa)). 2 DNA-binding regions (H-T-H motif) span residues 196-217 (DKFC…RQQT) and 244-267 (ISDI…TRET).

Binds DNA as a dimer.

Its subcellular location is the cytoplasm. In terms of biological role, activates expression of the rhaSR operon in response to L-rhamnose. The polypeptide is HTH-type transcriptional activator RhaR (Shigella flexneri serotype 5b (strain 8401)).